The primary structure comprises 200 residues: MLYYSGPVARLVDEFAKLPGIGPKTAQRLAFHVLNSPPELAQGLAKALVEVRQSIKRCSLCCNLTDEDPCSICQDTTRNSNLLCVVEEPRDVIAMEKARGYRGYYHVLHGAISPMEGIRPEDLTIKELLHRLQNGDIQEVILAANSDVEGETTALYLARLLKPLGVKVTRIAHGIPVGSDLEYADAMTLNKALEGRGEFG.

The segment at 58–73 adopts a C4-type zinc-finger fold; that stretch reads CSLCCNLTDEDPCSIC. A Toprim domain is found at 81–176; the sequence is NLLCVVEEPR…KVTRIAHGIP (96 aa).

It belongs to the RecR family.

Functionally, may play a role in DNA repair. It seems to be involved in an RecBC-independent recombinational process of DNA repair. It may act with RecF and RecO. The sequence is that of Recombination protein RecR from Desulforamulus reducens (strain ATCC BAA-1160 / DSM 100696 / MI-1) (Desulfotomaculum reducens).